The chain runs to 125 residues: Glycine cleavage system H protein (125 aa).

In terms of domain architecture, Lipoyl-binding spans 19–101; the sequence is GAVVGITDFA…NGSGWFFKLT (83 aa). Lysine 60 is subject to N6-lipoyllysine.

Belongs to the GcvH family. As to quaternary structure, the glycine cleavage system is composed of four proteins: P, T, L and H. Requires (R)-lipoate as cofactor.

Its function is as follows. The glycine cleavage system catalyzes the degradation of glycine. The H protein shuttles the methylamine group of glycine from the P protein to the T protein. This chain is Glycine cleavage system H protein, found in Methylocella silvestris (strain DSM 15510 / CIP 108128 / LMG 27833 / NCIMB 13906 / BL2).